The primary structure comprises 544 residues: CTP synthase (544 aa).

The segment at 1–267 (MAKFVFVTGG…CRQVLDVLSL (267 aa)) is amidoligase domain. CTP is bound at residue Ser-13. Ser-13 is a binding site for UTP. Residues 14 to 19 (SIGKGI) and Asp-71 contribute to the ATP site. Mg(2+) is bound by residues Asp-71 and Glu-141. CTP-binding positions include 148–150 (DIE), 188–193 (KTKPTQ), and Lys-224. UTP-binding positions include 188-193 (KTKPTQ) and Lys-224. Residues 292–534 (KVALVGKYVQ…IQAASQRLPQ (243 aa)) form the Glutamine amidotransferase type-1 domain. Gly-354 provides a ligand contact to L-glutamine. Residue Cys-381 is the Nucleophile; for glutamine hydrolysis of the active site. L-glutamine is bound by residues 382–385 (LGMQ), Glu-405, and Arg-462. Catalysis depends on residues His-507 and Glu-509.

It belongs to the CTP synthase family. In terms of assembly, homotetramer.

The enzyme catalyses UTP + L-glutamine + ATP + H2O = CTP + L-glutamate + ADP + phosphate + 2 H(+). It catalyses the reaction L-glutamine + H2O = L-glutamate + NH4(+). The catalysed reaction is UTP + NH4(+) + ATP = CTP + ADP + phosphate + 2 H(+). The protein operates within pyrimidine metabolism; CTP biosynthesis via de novo pathway; CTP from UDP: step 2/2. With respect to regulation, allosterically activated by GTP, when glutamine is the substrate; GTP has no effect on the reaction when ammonia is the substrate. The allosteric effector GTP functions by stabilizing the protein conformation that binds the tetrahedral intermediate(s) formed during glutamine hydrolysis. Inhibited by the product CTP, via allosteric rather than competitive inhibition. Functionally, catalyzes the ATP-dependent amination of UTP to CTP with either L-glutamine or ammonia as the source of nitrogen. Regulates intracellular CTP levels through interactions with the four ribonucleotide triphosphates. This Synechococcus sp. (strain RCC307) protein is CTP synthase.